The sequence spans 115 residues: Peptidyl-tRNA hydrolase (115 aa).

It belongs to the PTH2 family.

It is found in the cytoplasm. It carries out the reaction an N-acyl-L-alpha-aminoacyl-tRNA + H2O = an N-acyl-L-amino acid + a tRNA + H(+). In terms of biological role, the natural substrate for this enzyme may be peptidyl-tRNAs which drop off the ribosome during protein synthesis. The chain is Peptidyl-tRNA hydrolase from Methanosarcina acetivorans (strain ATCC 35395 / DSM 2834 / JCM 12185 / C2A).